Reading from the N-terminus, the 334-residue chain is Nucleoid-associated protein YPTS_1390 (334 aa).

This sequence belongs to the YejK family.

Its subcellular location is the cytoplasm. The protein localises to the nucleoid. This chain is Nucleoid-associated protein YPTS_1390, found in Yersinia pseudotuberculosis serotype IB (strain PB1/+).